A 132-amino-acid chain; its full sequence is Small ribosomal subunit protein uS8 (132 aa).

Belongs to the universal ribosomal protein uS8 family. In terms of assembly, part of the 30S ribosomal subunit. Contacts proteins S5 and S12.

Functionally, one of the primary rRNA binding proteins, it binds directly to 16S rRNA central domain where it helps coordinate assembly of the platform of the 30S subunit. The chain is Small ribosomal subunit protein uS8 from Streptococcus pneumoniae serotype 19F (strain G54).